A 62-amino-acid chain; its full sequence is MKKMNWLLLLFAFAAVFSIMLIGVFIAEKSPAGIIASIVLVCAVMGGGFTLKKKMREQGLLD.

Helical transmembrane passes span 7–27 (LLLL…VFIA) and 34–51 (IIAS…GFTL).

Its subcellular location is the cell membrane. This is an uncharacterized protein from Bacillus subtilis (strain 168).